We begin with the raw amino-acid sequence, 135 residues long: MTISEKSNESELYGERFISDAEIVCFPNPSPNRTYEISIELPEFTCQCPFSGYPDFAIIRLLYQPGEKVLELKSMKLYVNSFRNRKISHEEVANKMLDDFVAAANPSWMQLEADFNPRGNVHTVVRVSHGLKNNC.

Cys-48 functions as the Thioimide intermediate in the catalytic mechanism. Asp-55 functions as the Proton donor in the catalytic mechanism. Substrate contacts are provided by residues 70–72 (LEL) and 89–90 (HE).

The protein belongs to the GTP cyclohydrolase I family. QueF type 1 subfamily.

Its subcellular location is the cytoplasm. It carries out the reaction 7-aminomethyl-7-carbaguanine + 2 NADP(+) = 7-cyano-7-deazaguanine + 2 NADPH + 3 H(+). It participates in tRNA modification; tRNA-queuosine biosynthesis. Catalyzes the NADPH-dependent reduction of 7-cyano-7-deazaguanine (preQ0) to 7-aminomethyl-7-deazaguanine (preQ1). The chain is NADPH-dependent 7-cyano-7-deazaguanine reductase from Prochlorococcus marinus (strain SARG / CCMP1375 / SS120).